The sequence spans 255 residues: Na(+)-translocating NADH-quinone reductase subunit C (255 aa).

The helical transmembrane segment at 11–31 (LGVVVGLSLVCSIIVSTAAVG) threads the bilayer. An FMN phosphoryl threonine modification is found at Thr-223.

The protein belongs to the NqrC family. As to quaternary structure, composed of six subunits; NqrA, NqrB, NqrC, NqrD, NqrE and NqrF. The cofactor is FMN.

Its subcellular location is the cell inner membrane. The catalysed reaction is a ubiquinone + n Na(+)(in) + NADH + H(+) = a ubiquinol + n Na(+)(out) + NAD(+). Functionally, NQR complex catalyzes the reduction of ubiquinone-1 to ubiquinol by two successive reactions, coupled with the transport of Na(+) ions from the cytoplasm to the periplasm. NqrA to NqrE are probably involved in the second step, the conversion of ubisemiquinone to ubiquinol. The polypeptide is Na(+)-translocating NADH-quinone reductase subunit C (Vibrio vulnificus (strain CMCP6)).